Consider the following 501-residue polypeptide: Putative zinc metalloprotease TM_0890 (501 aa).

Histidine 17 contacts Zn(2+). The active site involves glutamate 18. Residue histidine 21 participates in Zn(2+) binding. 4 helical membrane passes run 93–115, 401–420, 427–449, and 474–496; these read FLITLAGPLFSILAGYLLFLPIT, VQTGQIVGVVGLAGVISAAS, VLTVVAVITISLGVLNLLPLPAL, and IIHFLGFIFLMILFLYITFLDIG. The 85-residue stretch at 96-180 folds into the PDZ domain; the sequence is TLAGPLFSIL…LVIIRNGEKK (85 aa).

It belongs to the peptidase M50B family. Zn(2+) is required as a cofactor.

The protein localises to the cell inner membrane. The chain is Putative zinc metalloprotease TM_0890 from Thermotoga maritima (strain ATCC 43589 / DSM 3109 / JCM 10099 / NBRC 100826 / MSB8).